The following is a 726-amino-acid chain: MPPLDKRIKKFLKDSIRIAPKISGKGELSELRTGLVSQYPQTRKDAIKKTIQQMTLGKDVSSLFPDVLKNIATIDVEQKKLVYLYVMNYAETHPELCILAVNTFITDAQDPNPLIRCMAIRTMSMIRVDKILEYIETPLRRTLHDDNAYVRKTAVICVAKLFQLNKDLCVELGVVEDLVNALDDSNPLVIANATAALIEIHNMDMDAVDLSSLIQSHVSQFLLALNECTEWARIIILGTLSEYSAKDSLEAQDIIDRVTAHLQHVNPAVVLATIKVIVRNLPQIEYSSNSLIMKRLSSAFVSLMSTPPEMQYVALKNIRIILEKYPELLTKELRIFYVKFNDPLYVKLEKIDILVRLVDPSNLKQCTLLLTELKEYAMEYEPEFVSRAIQALSQLGIKYAQESFVSKVLDILLELLERQDTIKDDCCISLCDLLRHCPGNDKMAKQVCAVFNTWSNPEVLLQSDIAKCNYVWLLGQHPNNFSDLESKINIFIENFVQEEALTQMSLLMTIVRLHATLTGSMLQSVLELATQQTHELDVRDMAMMYWRCLSMPNNESLVNDLCQNKLPMISNTLEKFSPEVLEKLLMELGTISSIYFKPDSNRRKGKKYVQNIVKGKHIEELESMAKNEISSKANDDVLLDFDERDDVTNTNAGMLNTLTTLGDLDDLFDFGPSEDATQINTNDTKAVQGLKELKLGGDSNGISSGGKNNPDVSGGNIVSQDLLDLF.

This sequence belongs to the adaptor complexes large subunit family. Adaptor protein complex 1 (AP-1) is a heterotetramer composed of two large adaptins (gamma-type subunit APL4 and beta-type subunit APL2), a medium adaptin (mu-type subunit APM1) and a small adaptin (sigma-type subunit APS1). Interacts with CHC1. Interacts with APM2, probably forming an alternative AP-1-like complex.

Its subcellular location is the cell membrane. It localises to the membrane. The protein localises to the coated pit. Functionally, adaptins are components of the adaptor complexes which link clathrin to receptors in coated vesicles. Clathrin-associated protein complexes are believed to interact with the cytoplasmic tails of membrane proteins, leading to their selection and concentration. The AP-1 complex interacts directly with clathrin. The polypeptide is AP-1 complex subunit beta-1 (APL2) (Saccharomyces cerevisiae (strain ATCC 204508 / S288c) (Baker's yeast)).